We begin with the raw amino-acid sequence, 335 residues long: Probable pectinesterase 29 (335 aa).

Positions Met-1–Ala-24 are cleaved as a signal peptide. Asn-43 carries an N-linked (GlcNAc...) asparagine glycan. The active-site Proton donor is the Asp-166. Asp-187 (nucleophile) is an active-site residue. Substrate is bound by residues Arg-248 and Trp-250. Residue Asn-262 is glycosylated (N-linked (GlcNAc...) asparagine).

It belongs to the pectinesterase family. Expressed in flower buds.

It localises to the secreted. It is found in the cell wall. It catalyses the reaction [(1-&gt;4)-alpha-D-galacturonosyl methyl ester](n) + n H2O = [(1-&gt;4)-alpha-D-galacturonosyl](n) + n methanol + n H(+). It participates in glycan metabolism; pectin degradation; 2-dehydro-3-deoxy-D-gluconate from pectin: step 1/5. In terms of biological role, acts in the modification of cell walls via demethylesterification of cell wall pectin. This chain is Probable pectinesterase 29 (PME29), found in Arabidopsis thaliana (Mouse-ear cress).